We begin with the raw amino-acid sequence, 569 residues long: Probable ABC transporter permease protein y4fN (569 aa).

Transmembrane regions (helical) follow at residues 10–30, 68–88, 98–118, 121–141, 145–165, 196–216, 247–267, 304–324, 363–383, 395–415, 426–446, 480–500, and 534–554; these read VFYWLGLIVIAWAVLTFLLVP, VWMTAATTLTVTIVGMFQVAV, GFLKIAFSTPLVFGGVVAAAG, FTYGPSGAITAALAALFPSLP, FIGWFGVLFAHTFLMTSFHFL, VVLPVILPTVLAVTLLTLITA, PDMAALLALLMGLVLMGLILL, LAYLLAAIYLMPVALIVLFSF, MSSIAVAVGLAITLFAVPIMV, ICFVLPWIIPTMLLAVGLIVA, LVLLGSYWLLPIGYVIFSLPL, VVLPLVAPTAILVAGMKFNNL, and AAVSLVYVTLIMAFSLAVILI. The 205-residue stretch at 64–268 folds into the ABC transmembrane type-1 1 domain; it reads LWNTVWMTAA…LVLMGLILLS (205 aa). In terms of domain architecture, ABC transmembrane type-1 2 spans 357-551; the sequence is FFNSMLMSSI…TLIMAFSLAV (195 aa).

This sequence belongs to the binding-protein-dependent transport system permease family. CysTW subfamily.

The protein localises to the cell inner membrane. In terms of biological role, probably part of the binding-protein-dependent transport system y4fNOP. Probably responsible for the translocation of the substrate across the membrane. In Sinorhizobium fredii (strain NBRC 101917 / NGR234), this protein is Probable ABC transporter permease protein y4fN.